Here is a 284-residue protein sequence, read N- to C-terminus: Tropomyosin-1 (284 aa).

A coiled-coil region spans residues 1–284 (MDAIKKKMLA…DSTFAELAGY (284 aa)). Residues 103–131 (EERLQSATEKLEEASKAADESERGRKVLE) are disordered.

Belongs to the tropomyosin family. Homodimer.

Its function is as follows. Tropomyosin, in association with the troponin complex, plays a central role in the calcium dependent regulation of muscle contraction. This Biomphalaria glabrata (Bloodfluke planorb) protein is Tropomyosin-1.